Reading from the N-terminus, the 88-residue chain is Small ribosomal subunit protein uS17 (88 aa).

The protein belongs to the universal ribosomal protein uS17 family. Part of the 30S ribosomal subunit.

Functionally, one of the primary rRNA binding proteins, it binds specifically to the 5'-end of 16S ribosomal RNA. The polypeptide is Small ribosomal subunit protein uS17 (Prochlorococcus marinus (strain NATL1A)).